We begin with the raw amino-acid sequence, 393 residues long: Sugar efflux transporter B (393 aa).

Transmembrane regions (helical) follow at residues 13-33 (FDLT…AGAL), 52-72 (MVGF…QFLA), 84-101 (LIVF…LFAW), 105-124 (YFIL…TANP), 152-172 (VSLA…GFSF), 174-194 (VMYL…WFFL), 219-239 (LLLF…IINM), 253-273 (LAGV…LIAG), 283-303 (LLMC…LLAH), 308-328 (LLGL…IGML), 344-364 (LYTN…GIAA), and 366-386 (IWNY…TMFC).

It belongs to the major facilitator superfamily. Set transporter family.

It is found in the cell inner membrane. Its function is as follows. Involved in the efflux of sugars. The physiological role may be the detoxification of non-metabolizable sugar analogs. Can transport lactose and glucose. This is Sugar efflux transporter B (setB) from Salmonella typhimurium (strain LT2 / SGSC1412 / ATCC 700720).